A 225-amino-acid chain; its full sequence is MMLKKEQTTNNLKLPISLNASGWLESSPDWSNISGLVAGVDEVGRGALFGPVVAASVILPASAFPHLMTAEIKDSKKLSHSRRVQLAQQISTLAIDWRIGYATTAEIDRINILQATLLAMKRSVKKLKLQPILCLIDGNQPVQDLLMLQQTIVKGDERSLNIAAASIMAKVWRDDLIQRLATKYPMYDLKSNKGYGSKKHLLALAQHGASPLHRQSFRPCQISPD.

In terms of domain architecture, RNase H type-2 spans 35 to 225 (GLVAGVDEVG…SFRPCQISPD (191 aa)). A divalent metal cation-binding residues include Asp41, Glu42, and Asp137.

This sequence belongs to the RNase HII family. Mn(2+) is required as a cofactor. Mg(2+) serves as cofactor.

It localises to the cytoplasm. The catalysed reaction is Endonucleolytic cleavage to 5'-phosphomonoester.. Endonuclease that specifically degrades the RNA of RNA-DNA hybrids. The sequence is that of Ribonuclease HII from Nostoc sp. (strain PCC 7120 / SAG 25.82 / UTEX 2576).